A 174-amino-acid chain; its full sequence is uncharacterized protein (174 aa).

This is an uncharacterized protein from Acidianus convivator (ABV).